Here is a 562-residue protein sequence, read N- to C-terminus: Glutamine--tRNA ligase (562 aa).

Residues 35-45 (PEPNGYLHIGH) carry the 'HIGH' region motif. Residues 36 to 38 (EPN) and 42 to 48 (HIGHAKS) each bind ATP. 2 residues coordinate L-glutamine: D68 and Y213. Residues T232 and 264-265 (RL) contribute to the ATP site. The short motif at 271–275 (ITSKR) is the 'KMSKS' region element.

Belongs to the class-I aminoacyl-tRNA synthetase family. Monomer.

It localises to the cytoplasm. It catalyses the reaction tRNA(Gln) + L-glutamine + ATP = L-glutaminyl-tRNA(Gln) + AMP + diphosphate. This is Glutamine--tRNA ligase from Neisseria meningitidis serogroup A / serotype 4A (strain DSM 15465 / Z2491).